Consider the following 178-residue polypeptide: Long polar fimbria protein A (178 aa).

Residues 1-24 (MEFLMKKVVFALSALAVVSTSAFA) form the signal peptide.

Belongs to the fimbrial protein family.

It is found in the fimbrium. In Salmonella typhimurium (strain LT2 / SGSC1412 / ATCC 700720), this protein is Long polar fimbria protein A (lpfA).